The following is a 240-amino-acid chain: Mannose-binding protein C (240 aa).

Residues 1-18 form the signal peptide; that stretch reads MSLFPSLHLLLLIVMTAS. Collagen-like domains follow at residues 39 to 61 and 67 to 97; these read SPGI…KGEP and GLQG…GDSG. P46 is subject to Hydroxyproline. Residues 48–102 are disordered; that stretch reads KDGLDGAKGEKGEPGQGLIGLQGLPGMVGPQGSPGIPGLPGLKGQKGDSGIDPGN. The span at 49–60 shows a compositional bias: basic and acidic residues; that stretch reads DGLDGAKGEKGE. 3 positions are modified to hydroxyproline: P72, P81, and P87. Positions 104–122 form a coiled coil; the sequence is LANLRSELDNIKKWLIFAQ. The 112-residue stretch at 126–237 folds into the C-type lectin domain; the sequence is VGKKLYLTNG…CSSQLSAVCE (112 aa). Intrachain disulfides connect C147-C236 and C214-C228.

As to quaternary structure, interacts with MASP1 and MASP2. Interacts with MEP1A and MEP1B and may inhibit their catalytic activity. Forms oligomeric complexes of 2 or 3 homotrimers. As to expression, expressed in liver. Weakly expressed in kidney and testis.

The protein localises to the secreted. Functionally, calcium-dependent lectin involved in innate immune defense. Binds mannose, fucose and N-acetylglucosamine on different microorganisms and activates the lectin complement pathway. Binds to late apoptotic cells, as well as to apoptotic blebs and to necrotic cells, but not to early apoptotic cells, facilitating their uptake by macrophages. According to some authors, it only binds mannose. This Sus scrofa (Pig) protein is Mannose-binding protein C.